The primary structure comprises 151 residues: Glycosylation-dependent cell adhesion molecule 1 (151 aa).

An N-terminal signal peptide occupies residues M1 to L19. Residues M29 to V123 are disordered. Low complexity predominate over residues S42–S52. The span at T53–S71 shows a compositional bias: basic and acidic residues. A phosphoserine mark is found at S54, S59, S63, and S71. A compositionally biased stretch (low complexity) spans R103–E114. The N-linked (GlcNAc...) asparagine glycan is linked to N115.

The protein belongs to the PP3/GlyCAM-1 family. Post-translationally, extensively O-glycosylated. As to expression, lymph nodes. Associated with the lumenal surface of the high endothelial venules of peripheral lymph nodes.

It is found in the cell membrane. Its function is as follows. Adhesion molecule that accomplishes cell binding by presenting carbohydrate(s) to the lectin domain of L-selectin. The sequence is that of Glycosylation-dependent cell adhesion molecule 1 (Glycam1) from Mus musculus (Mouse).